The following is a 436-amino-acid chain: tRNA-2-methylthio-N(6)-dimethylallyladenosine synthase (436 aa).

An MTTase N-terminal domain is found at 5-121 (RKLFIKTYGC…LPDMLERTEG (117 aa)). The [4Fe-4S] cluster site is built by Cys-14, Cys-50, Cys-84, Cys-158, Cys-162, and Cys-165. In terms of domain architecture, Radical SAM core spans 144–374 (ATRGPAAFLT…TEQQRAAQMA (231 aa)). A TRAM domain is found at 373-435 (MAMVGREVGV…PNSLAGERLG (63 aa)).

This sequence belongs to the methylthiotransferase family. MiaB subfamily. As to quaternary structure, monomer. It depends on [4Fe-4S] cluster as a cofactor.

The protein localises to the cytoplasm. The enzyme catalyses N(6)-dimethylallyladenosine(37) in tRNA + (sulfur carrier)-SH + AH2 + 2 S-adenosyl-L-methionine = 2-methylsulfanyl-N(6)-dimethylallyladenosine(37) in tRNA + (sulfur carrier)-H + 5'-deoxyadenosine + L-methionine + A + S-adenosyl-L-homocysteine + 2 H(+). Functionally, catalyzes the methylthiolation of N6-(dimethylallyl)adenosine (i(6)A), leading to the formation of 2-methylthio-N6-(dimethylallyl)adenosine (ms(2)i(6)A) at position 37 in tRNAs that read codons beginning with uridine. The sequence is that of tRNA-2-methylthio-N(6)-dimethylallyladenosine synthase from Cereibacter sphaeroides (strain ATCC 17023 / DSM 158 / JCM 6121 / CCUG 31486 / LMG 2827 / NBRC 12203 / NCIMB 8253 / ATH 2.4.1.) (Rhodobacter sphaeroides).